A 508-amino-acid chain; its full sequence is Photosystem II CP47 reaction center protein (508 aa).

The next 6 helical transmembrane spans lie at 21–36 (AVHL…WAGS), 101–115 (IVLS…IWHW), 140–156 (GIHL…FGAF), 203–218 (IAAG…FHLS), 237–252 (VLSS…AFVV), and 457–472 (TFAL…HGAR).

This sequence belongs to the PsbB/PsbC family. PsbB subfamily. As to quaternary structure, PSII is composed of 1 copy each of membrane proteins PsbA, PsbB, PsbC, PsbD, PsbE, PsbF, PsbH, PsbI, PsbJ, PsbK, PsbL, PsbM, PsbT, PsbX, PsbY, PsbZ, Psb30/Ycf12, at least 3 peripheral proteins of the oxygen-evolving complex and a large number of cofactors. It forms dimeric complexes. Requires Binds multiple chlorophylls. PSII binds additional chlorophylls, carotenoids and specific lipids. as cofactor.

It is found in the plastid. It localises to the chloroplast thylakoid membrane. In terms of biological role, one of the components of the core complex of photosystem II (PSII). It binds chlorophyll and helps catalyze the primary light-induced photochemical processes of PSII. PSII is a light-driven water:plastoquinone oxidoreductase, using light energy to abstract electrons from H(2)O, generating O(2) and a proton gradient subsequently used for ATP formation. The polypeptide is Photosystem II CP47 reaction center protein (Anthoceros angustus (Hornwort)).